We begin with the raw amino-acid sequence, 251 residues long: ATP synthase subunit a 2 (251 aa).

Helical transmembrane passes span Gly-35–Ala-55, Leu-94–Ile-114, Ile-133–Ser-153, Leu-198–Leu-218, and Gly-219–His-239.

The protein belongs to the ATPase A chain family. F-type ATPases have 2 components, CF(1) - the catalytic core - and CF(0) - the membrane proton channel. CF(1) has five subunits: alpha(3), beta(3), gamma(1), delta(1), epsilon(1). CF(0) has four main subunits: a, b, b' and c.

It localises to the cellular thylakoid membrane. Functionally, key component of the proton channel; it plays a direct role in the translocation of protons across the membrane. The sequence is that of ATP synthase subunit a 2 from Crocosphaera subtropica (strain ATCC 51142 / BH68) (Cyanothece sp. (strain ATCC 51142)).